Reading from the N-terminus, the 66-residue chain is uncharacterized protein (66 aa).

Residues M1–N20 show a composition bias toward low complexity. Residues M1–N47 are disordered. Residues N36–N47 show a composition bias toward polar residues.

This is an uncharacterized protein from Dictyostelium discoideum (Social amoeba).